The sequence spans 250 residues: Glycerol-1-phosphate phosphohydrolase 1 (250 aa).

Asp-18 serves as the catalytic Nucleophile. Positions 18 and 20 each coordinate Mg(2+). Asp-20 (proton donor) is an active-site residue. Residue Lys-64 forms a Glycyl lysine isopeptide (Lys-Gly) (interchain with G-Cter in SUMO); alternate linkage. Residue Lys-64 forms a Glycyl lysine isopeptide (Lys-Gly) (interchain with G-Cter in ubiquitin); alternate linkage. Position 90 is a phosphoserine (Ser-90). A Glycyl lysine isopeptide (Lys-Gly) (interchain with G-Cter in ubiquitin) cross-link involves residue Lys-144. Asp-179 is a Mg(2+) binding site.

This sequence belongs to the HAD-like hydrolase superfamily. DOG/GPP family. In terms of assembly, monomer. Requires Mg(2+) as cofactor.

Its subcellular location is the cytoplasm. The protein localises to the nucleus. It catalyses the reaction sn-glycerol 1-phosphate + H2O = glycerol + phosphate. The enzyme catalyses sn-glycerol 3-phosphate + H2O = glycerol + phosphate. Its function is as follows. Major isoform of glycerol-1-phosphate phosphohydrolase involved in glycerol biosynthesis. Plays a role in osmoadaptation and required for adaptation to anaerobic conditions. This Saccharomyces cerevisiae (strain ATCC 204508 / S288c) (Baker's yeast) protein is Glycerol-1-phosphate phosphohydrolase 1.